Consider the following 215-residue polypeptide: Ribose-5-phosphate isomerase A (215 aa).

Residues T26–T29, D79–D82, and K92–G95 each bind substrate. E101 functions as the Proton acceptor in the catalytic mechanism. Position 119 (K119) interacts with substrate.

Belongs to the ribose 5-phosphate isomerase family. As to quaternary structure, homodimer.

It carries out the reaction aldehydo-D-ribose 5-phosphate = D-ribulose 5-phosphate. Its pathway is carbohydrate degradation; pentose phosphate pathway; D-ribose 5-phosphate from D-ribulose 5-phosphate (non-oxidative stage): step 1/1. In terms of biological role, catalyzes the reversible conversion of ribose-5-phosphate to ribulose 5-phosphate. In Stenotrophomonas maltophilia (strain R551-3), this protein is Ribose-5-phosphate isomerase A.